Here is a 344-residue protein sequence, read N- to C-terminus: MSNAITMGIFWHLIGAASAACFYAPFKQVKQWSWETMWSVGGIVSWLILPWAISALLLPDFWAYYGQFNLSTLLPVFLFGAMWGIGNINYGLTMRYLGMSMGIGIAIGITLIVGTLMTPIINGNFDVLIHTEGGRMTLLGVFVALIGVGIVTRAGQLKERKMGIKAEEFNLKKGLLLAVMCGIFSAGMSFAMNAAKPMHEAAAALGVDPLYVALPSYVVIMGGGALVNLGFCFIRLAKVQNLSIKADFSLARPLIISNILLSALGGLMWYLQFFFYAWGHARIPAQYDYMSWMLHMSFYVLCGGLVGLVLKEWKNAGRRPVAVLSLGCVVIIIAANIVGLGMAS.

10 consecutive transmembrane segments (helical) span residues 4 to 24 (AITMGIFWHLIGAASAACFYA), 38 to 58 (WSVGGIVSWLILPWAISALLL), 68 to 88 (FNLSTLLPVFLFGAMWGIGNI), 101 to 121 (MGIGIAIGITLIVGTLMTPII), 137 to 157 (TLLGVFVALIGVGIVTRAGQL), 175 to 195 (LLLAVMCGIFSAGMSFAMNAA), 214 to 234 (LPSYVVIMGGGALVNLGFCFI), 259 to 279 (ILLSALGGLMWYLQFFFYAWG), 290 to 310 (MSWMLHMSFYVLCGGLVGLVL), and 321 to 341 (VAVLSLGCVVIIIAANIVGLG).

It belongs to the L-rhamnose transporter (TC 2.A.7.6) family.

The protein localises to the cell inner membrane. The enzyme catalyses L-rhamnopyranose(in) + H(+)(in) = L-rhamnopyranose(out) + H(+)(out). In terms of biological role, uptake of L-rhamnose across the cytoplasmic membrane with the concomitant transport of protons into the cell (symport system). The sequence is that of L-rhamnose-proton symporter from Salmonella dublin (strain CT_02021853).